Here is an 882-residue protein sequence, read N- to C-terminus: MTDVTIKTLAAERQTSVERLVQQFADAGIRKSADDSVSAQEKQTLIDHLNQKNSGPDKLTLQRKTRSTLNIPGTGGKSKSVQIEVRKKRTFVKRDPQEAERLAAEEQARREAEESAKREAQQKAEREAAEQAKREAAEQAKREAAEKDKVSNQQDDMTKNAQAEKARREQEAAELKRKAEEEARRKLEEEARRVAEEARRMAEENKWTDNAEPTEDSSDYHVTTSQHARQAEDESDREVEGGRGRGRNAKAARPKKGNKHAESKADREEARAAVRGGKGGKRKGSSLQQGFQKPAQVVNRDVVIGETITVGELANKMAVKGSQVIKAMMKLGAMATINQVIDQETAQLVAEEMGHKVILRRENELEEAVMSDRDTGAAAEPRAPVVTIMGHVDHGKTSLLDYIRSTKVASGEAGGITQHIGAYHVETENGMITFLDTPGHAAFTSMRARGAQATDIVVLVVAADDGVMPQTIEAIQHAKAAQVPVVVAVNKIDKPEADPDRVKNELSQYGILPEEWGGESQFVHVSAKAGTGIDELLDAILLQAEVLELKAVRKGMASGAVIESFLDKGRGPVATVLVREGTLHKGDIVLCGFEYGRVRAMRNELGQEVLEAGPSIPVEILGLSGVPAAGDEVTVVRDEKKAREVALYRQGKFREVKLARQQKSKLENMFANMTEGEVHEVNIVLKADVQGSVEAISDSLLKLSTDEVKVKIIGSGVGGITETDATLAAASNAILVGFNVRADASARKVIEAESLDLRYYSVIYNLIDEVKAAMSGMLSPELKQQIIGLAEVRDVFKSPKFGAIAGCMVTEGVVKRHNPIRVLRDNVVIYEGELESLRRFKDDVNEVRNGMECGIGVKNYNDVRTGDVIEVFEIIEIQRTIA.

Residues 28-294 (GIRKSADDSV…SSLQQGFQKP (267 aa)) form a disordered region. Positions 67-81 (STLNIPGTGGKSKSV) are enriched in polar residues. Over residues 92 to 209 (VKRDPQEAER…RMAEENKWTD (118 aa)) the composition is skewed to basic and acidic residues. The span at 244-258 (GRGRNAKAARPKKGN) shows a compositional bias: basic residues. Basic and acidic residues predominate over residues 259–272 (KHAESKADREEARA). Positions 381–550 (PRAPVVTIMG…LLQAEVLELK (170 aa)) constitute a tr-type G domain. Residues 390-397 (GHVDHGKT) are G1. GTP is bound at residue 390-397 (GHVDHGKT). A G2 region spans residues 415-419 (GITQH). The tract at residues 436–439 (DTPG) is G3. GTP-binding positions include 436–440 (DTPGH) and 490–493 (NKID). A G4 region spans residues 490-493 (NKID). A G5 region spans residues 526–528 (SAK). Lysine 800 is subject to N6-acetyllysine.

It belongs to the TRAFAC class translation factor GTPase superfamily. Classic translation factor GTPase family. IF-2 subfamily.

Its subcellular location is the cytoplasm. Functionally, one of the essential components for the initiation of protein synthesis. Protects formylmethionyl-tRNA from spontaneous hydrolysis and promotes its binding to the 30S ribosomal subunits. Also involved in the hydrolysis of GTP during the formation of the 70S ribosomal complex. This Shigella flexneri serotype 5b (strain 8401) protein is Translation initiation factor IF-2.